The primary structure comprises 369 residues: Flagellar P-ring protein (369 aa).

The signal sequence occupies residues 1-24; that stretch reads MSKTISLLKFIICILISLCSFTYA.

This sequence belongs to the FlgI family. As to quaternary structure, the basal body constitutes a major portion of the flagellar organelle and consists of four rings (L,P,S, and M) mounted on a central rod.

Its subcellular location is the bacterial flagellum basal body. Assembles around the rod to form the L-ring and probably protects the motor/basal body from shearing forces during rotation. The sequence is that of Flagellar P-ring protein from Buchnera aphidicola subsp. Schizaphis graminum (strain Sg).